The following is a 359-amino-acid chain: Protein Wnt-5b (359 aa).

The N-terminal stretch at 1–17 (MPSLLLLFTAALLSSWA) is a signal peptide. A disulfide bridge links Cys83 with Cys94. N-linked (GlcNAc...) asparagine glycosylation is found at Asn93 and Asn99. Intrachain disulfides connect Cys133–Cys141, Cys143–Cys161, Cys217–Cys231, Cys219–Cys226, Cys288–Cys319, Cys304–Cys314, Cys318–Cys358, Cys334–Cys349, Cys336–Cys346, and Cys341–Cys342. Ser223 is lipidated: O-palmitoleoyl serine; by PORCN. Residues Asn291 and Asn305 are each glycosylated (N-linked (GlcNAc...) asparagine).

Belongs to the Wnt family. In terms of assembly, interacts with PORCN. Post-translationally, palmitoleoylation is required for efficient binding to frizzled receptors. Depalmitoleoylation leads to Wnt signaling pathway inhibition.

It is found in the secreted. It localises to the extracellular space. The protein localises to the extracellular matrix. In terms of biological role, ligand for members of the frizzled family of seven transmembrane receptors. Probable developmental protein. May be a signaling molecule which affects the development of discrete regions of tissues. Is likely to signal over only few cell diameters. The polypeptide is Protein Wnt-5b (WNT5B) (Homo sapiens (Human)).